The primary structure comprises 131 residues: Small ribosomal subunit protein eS24 (131 aa).

M1 carries the post-translational modification N-acetylmethionine. T9 carries the phosphothreonine modification. K37 is covalently cross-linked (Glycyl lysine isopeptide (Lys-Gly) (interchain with G-Cter in SUMO2)). Residues 90 to 100 show a composition bias toward basic and acidic residues; sequence RLARHGLYEKK. Residues 90–131 form a disordered region; it reads RLARHGLYEKKKTSRKQRKERKNRMKKVRGTAKANVGAGKKK. A compositionally biased stretch (basic residues) spans 101-119; sequence KTSRKQRKERKNRMKKVRG.

It belongs to the eukaryotic ribosomal protein eS24 family. As to quaternary structure, component of the small ribosomal subunit. Part of the small subunit (SSU) processome, composed of more than 70 proteins and the RNA chaperone small nucleolar RNA (snoRNA) U3.

Its subcellular location is the cytoplasm. It localises to the nucleus. The protein localises to the nucleolus. Functionally, component of the small ribosomal subunit. The ribosome is a large ribonucleoprotein complex responsible for the synthesis of proteins in the cell. Required for processing of pre-rRNA and maturation of 40S ribosomal subunits. Part of the small subunit (SSU) processome, first precursor of the small eukaryotic ribosomal subunit. During the assembly of the SSU processome in the nucleolus, many ribosome biogenesis factors, an RNA chaperone and ribosomal proteins associate with the nascent pre-rRNA and work in concert to generate RNA folding, modifications, rearrangements and cleavage as well as targeted degradation of pre-ribosomal RNA by the RNA exosome. This Macaca fascicularis (Crab-eating macaque) protein is Small ribosomal subunit protein eS24 (RPS24).